A 404-amino-acid polypeptide reads, in one-letter code: Probable glucan endo-1,6-beta-glucosidase B (404 aa).

A signal peptide spans Met-1 to Ala-20. N-linked (GlcNAc...) asparagine glycans are attached at residues Asn-33 and Asn-130. Glu-222 functions as the Proton donor in the catalytic mechanism. N-linked (GlcNAc...) asparagine glycosylation is found at Asn-253 and Asn-299. Catalysis depends on Glu-324, which acts as the Nucleophile.

This sequence belongs to the glycosyl hydrolase 5 (cellulase A) family.

The protein resides in the secreted. It catalyses the reaction Random hydrolysis of (1-&gt;6)-linkages in (1-&gt;6)-beta-D-glucans.. Its function is as follows. Beta-glucanases participate in the metabolism of beta-glucan, the main structural component of the cell wall. Acts on lutean, pustulan and 1,6-oligo-beta-D-glucosides. This chain is Probable glucan endo-1,6-beta-glucosidase B (exgB), found in Aspergillus terreus (strain NIH 2624 / FGSC A1156).